The sequence spans 230 residues: Fibrillarin-like rRNA/tRNA 2'-O-methyltransferase (230 aa).

S-adenosyl-L-methionine is bound by residues 87-88, 105-106, 130-131, and 150-153; these read TT, EF, DA, and DVAQ.

The protein belongs to the methyltransferase superfamily. Fibrillarin family. In terms of assembly, interacts with nop5. Component of box C/D small ribonucleoprotein (sRNP) particles that contain rpl7ae, FlpA and nop5, plus a guide RNA.

Involved in pre-rRNA and tRNA processing. Utilizes the methyl donor S-adenosyl-L-methionine to catalyze the site-specific 2'-hydroxyl methylation of ribose moieties in rRNA and tRNA. Site specificity is provided by a guide RNA that base pairs with the substrate. Methylation occurs at a characteristic distance from the sequence involved in base pairing with the guide RNA. The polypeptide is Fibrillarin-like rRNA/tRNA 2'-O-methyltransferase (Methanococcus maripaludis (strain C5 / ATCC BAA-1333)).